We begin with the raw amino-acid sequence, 1149 residues long: Potassium channel subfamily U member 1 (1149 aa).

Over 1-24 (MFQTKLRNESWEDLQKMSCTTEIQ) the chain is Extracellular. Residues 25–45 (VAFILSSFMTFISGLIILLIF) traverse the membrane as a helical segment. Over 46-101 (RLIWRTVKKWQIIKGTGIILELFTSGSIRRNHVRSLHFHGRFRDRIEMLLSAQTFV) the chain is Cytoplasmic. The chain crosses the membrane as a helical span at residues 102-122 (GQVLVILVFVLSIGSLIIYFI). Topologically, residues 123–138 (NSADPVGSCSSYEDKT) are extracellular. The chain crosses the membrane as a helical span at residues 139–159 (IPVDLVFNAFFSFYFGLRFMA). Topologically, residues 160–163 (ADDK) are cytoplasmic. A helical transmembrane segment spans residues 164–184 (IKFWLEMNSIVDIFTIPPTFI). At 185–188 (SYYL) the chain is on the extracellular side. The chain crosses the membrane as a helical; Voltage-sensor span at residues 189 to 209 (KSNWLGLRFLRALRLLELPRI). At 210 to 226 (LQILRAIKTSNSVKFSK) the chain is on the cytoplasmic side. A helical transmembrane segment spans residues 227-247 (LLSIVLSTWFTAAGFIHLVEN). The Extracellular segment spans residues 248-259 (SGDPWLKGRNSQ). Residues 260–282 (NISYFDSVYLVMATTSTVGFGDV) constitute an intramembrane region (pore-forming). The short motif at 276 to 279 (TVGF) is the Selectivity for potassium element. The Extracellular portion of the chain corresponds to 283 to 291 (VAKTSLGRT). A helical transmembrane segment spans residues 292 to 312 (FIIFFTLGSLILFANYIPEMV). Residues 313-1149 (ELFANKRKYT…EDPFAYSEPL (837 aa)) lie on the Cytoplasmic side of the membrane. 2 consecutive RCK N-terminal domains span residues 331-473 (KKFI…DNII) and 713-884 (RNHI…EGSL). Positions 829–845 (IDSSSDSSPSVSEETAS) are enriched in low complexity. 2 disordered regions span residues 829–851 (IDSS…NGHN) and 1106–1149 (ARNQ…SEPL). Positions 1106-1120 (ARNQIRTNSSITSQK) are enriched in polar residues.

The protein belongs to the potassium channel family. Calcium-activated (TC 1.A.1.3) subfamily. KCa5.1/KCNU1 sub-subfamily. Homotetramer; which constitutes the calcium-activated potassium channel. Interacts with LRRC52; this interaction changes some channel gating properties, such as shifting gating to more negative potentials at a given pH. As to expression, testis-specific.

The protein resides in the cell membrane. Its subcellular location is the cell projection. It localises to the cilium. It is found in the flagellum membrane. It carries out the reaction K(+)(in) = K(+)(out). With respect to regulation, regulated by changes in cytosolic pH; activated by alkalization. VU0546110 acts as a selective inhibitor. The auxiliary subunit LRRC52 shifts the activation of KCNU1 to more negative potentials at a given pH. Its function is as follows. Testis-specific potassium channel activated by both intracellular pH and membrane voltage that mediates export of K(+). Represents the primary spermatozoan K(+) current. The channel underlies a pH-triggered membrane hyperpolarization during the process of sperm capacitation, as sperm encounter the alkaline environment near the ovum in the female reproductive tract, thereby playing an essential for male fertility. The protein is Potassium channel subfamily U member 1 (KCNU1) of Macaca fascicularis (Crab-eating macaque).